The chain runs to 310 residues: Ribose-phosphate pyrophosphokinase (310 aa).

ATP-binding positions include 33–35 (DGE) and 92–93 (RQ). Positions 127 and 166 each coordinate Mg(2+). Lys189 is an active-site residue. D-ribose 5-phosphate is bound by residues Arg191, Asp215, and 219 to 223 (DTAGT).

Belongs to the ribose-phosphate pyrophosphokinase family. Class I subfamily. In terms of assembly, homohexamer. Requires Mg(2+) as cofactor.

The protein localises to the cytoplasm. The catalysed reaction is D-ribose 5-phosphate + ATP = 5-phospho-alpha-D-ribose 1-diphosphate + AMP + H(+). It participates in metabolic intermediate biosynthesis; 5-phospho-alpha-D-ribose 1-diphosphate biosynthesis; 5-phospho-alpha-D-ribose 1-diphosphate from D-ribose 5-phosphate (route I): step 1/1. Involved in the biosynthesis of the central metabolite phospho-alpha-D-ribosyl-1-pyrophosphate (PRPP) via the transfer of pyrophosphoryl group from ATP to 1-hydroxyl of ribose-5-phosphate (Rib-5-P). The sequence is that of Ribose-phosphate pyrophosphokinase from Bordetella pertussis (strain Tohama I / ATCC BAA-589 / NCTC 13251).